Reading from the N-terminus, the 610-residue chain is Dihydroxy-acid dehydratase (610 aa).

Aspartate 81 lines the Mg(2+) pocket. Position 122 (cysteine 122) interacts with [2Fe-2S] cluster. Mg(2+) contacts are provided by aspartate 123 and lysine 124. At lysine 124 the chain carries N6-carboxylysine. Cysteine 196 lines the [2Fe-2S] cluster pocket. Glutamate 492 contacts Mg(2+). Residue serine 518 is the Proton acceptor of the active site.

The protein belongs to the IlvD/Edd family. As to quaternary structure, homodimer. Requires [2Fe-2S] cluster as cofactor. Mg(2+) serves as cofactor.

The catalysed reaction is (2R)-2,3-dihydroxy-3-methylbutanoate = 3-methyl-2-oxobutanoate + H2O. It catalyses the reaction (2R,3R)-2,3-dihydroxy-3-methylpentanoate = (S)-3-methyl-2-oxopentanoate + H2O. It functions in the pathway amino-acid biosynthesis; L-isoleucine biosynthesis; L-isoleucine from 2-oxobutanoate: step 3/4. The protein operates within amino-acid biosynthesis; L-valine biosynthesis; L-valine from pyruvate: step 3/4. Its function is as follows. Functions in the biosynthesis of branched-chain amino acids. Catalyzes the dehydration of (2R,3R)-2,3-dihydroxy-3-methylpentanoate (2,3-dihydroxy-3-methylvalerate) into 2-oxo-3-methylpentanoate (2-oxo-3-methylvalerate) and of (2R)-2,3-dihydroxy-3-methylbutanoate (2,3-dihydroxyisovalerate) into 2-oxo-3-methylbutanoate (2-oxoisovalerate), the penultimate precursor to L-isoleucine and L-valine, respectively. In Ruegeria pomeroyi (strain ATCC 700808 / DSM 15171 / DSS-3) (Silicibacter pomeroyi), this protein is Dihydroxy-acid dehydratase.